The following is a 303-amino-acid chain: Glutamate formimidoyltransferase (303 aa).

H81 (for formimidoyltransferase activity) is an active-site residue. 164-172 provides a ligand contact to folate; that stretch reads GPSVVGKAG.

Belongs to the formiminotransferase family.

It is found in the cytoplasm. The enzyme catalyses (6S)-5-formyl-5,6,7,8-tetrahydrofolate + L-glutamate = N-formyl-L-glutamate + (6S)-5,6,7,8-tetrahydrofolate + H(+). The catalysed reaction is 5-formimidoyltetrahydrofolate + L-glutamate = N-formimidoyl-L-glutamate + (6S)-5,6,7,8-tetrahydrofolate. It catalyses the reaction (6S)-5-formyl-5,6,7,8-tetrahydrofolate + ATP = (6R)-5,10-methenyltetrahydrofolate + ADP + phosphate. It functions in the pathway amino-acid degradation; L-histidine degradation into L-glutamate; L-glutamate from N-formimidoyl-L-glutamate (transferase route): step 1/1. The protein operates within one-carbon metabolism; tetrahydrofolate interconversion. Catalyzes the transfer of the formyl group from N-formylglutamate to tetrahydrofolate (THF) to yield 5-formyltetrahydrofolate (5-CHO-THF) and glutamate (Glu). The triglutamate form of 5-CHO-THF (5-CHO-THF-Glu3) can also be used as substrate. It can also catalyze the transfer of the formimino group from N-formiminoglutamate to tetrahydrofolate (THF) to yield 5-formiminotetrahydrofolate (5-NH=CH-THF) and glutamate (Glu). It can replace YgfA to catalyze the irreversible ATP-dependent transformation of 5-CHO-THF to form 5,10-methenyltetrahydrofolate (5,10-CH=THF). This Thermoplasma acidophilum (strain ATCC 25905 / DSM 1728 / JCM 9062 / NBRC 15155 / AMRC-C165) protein is Glutamate formimidoyltransferase.